The following is a 163-amino-acid chain: UPF0262 protein RPA4530 (163 aa).

Belongs to the UPF0262 family.

The sequence is that of UPF0262 protein RPA4530 from Rhodopseudomonas palustris (strain ATCC BAA-98 / CGA009).